The following is a 389-amino-acid chain: S-adenosylmethionine synthase (389 aa).

His17 serves as a coordination point for ATP. Asp19 serves as a coordination point for Mg(2+). K(+) is bound at residue Glu45. Residues Glu58 and Gln102 each contribute to the L-methionine site. Residues 102–112 (QSADIAQGVDA) are flexible loop. ATP-binding positions include 167–169 (DAK), Asp241, 247–248 (RK), Ala264, and Lys268. Asp241 contributes to the L-methionine binding site. L-methionine is bound at residue Lys272.

Belongs to the AdoMet synthase family. In terms of assembly, homotetramer; dimer of dimers. Mg(2+) is required as a cofactor. Requires K(+) as cofactor.

The protein resides in the cytoplasm. It carries out the reaction L-methionine + ATP + H2O = S-adenosyl-L-methionine + phosphate + diphosphate. It participates in amino-acid biosynthesis; S-adenosyl-L-methionine biosynthesis; S-adenosyl-L-methionine from L-methionine: step 1/1. In terms of biological role, catalyzes the formation of S-adenosylmethionine (AdoMet) from methionine and ATP. The overall synthetic reaction is composed of two sequential steps, AdoMet formation and the subsequent tripolyphosphate hydrolysis which occurs prior to release of AdoMet from the enzyme. The sequence is that of S-adenosylmethionine synthase from Parvibaculum lavamentivorans (strain DS-1 / DSM 13023 / NCIMB 13966).